The chain runs to 264 residues: 2-hydroxyhexa-2,4-dienoate hydratase (264 aa).

The protein belongs to the hydratase/decarboxylase family.

It carries out the reaction (2Z,4Z)-2-hydroxyhexa-2,4-dienoate + H2O = 4-hydroxy-2-oxohexanoate. Involved in the catatabolism of testosterone. Catalyzes the hydration of 2-hydroxyhexa-2,4-dienoic acid to 4-hydroxy-2-oxohexanoic acid. This chain is 2-hydroxyhexa-2,4-dienoate hydratase (tesE), found in Comamonas testosteroni (Pseudomonas testosteroni).